The chain runs to 61 residues: Small ribosomal subunit protein uS14 (61 aa).

Zn(2+) contacts are provided by Cys-24, Cys-27, Cys-40, and Cys-43.

Belongs to the universal ribosomal protein uS14 family. Zinc-binding uS14 subfamily. Part of the 30S ribosomal subunit. Contacts proteins S3 and S10. It depends on Zn(2+) as a cofactor.

Binds 16S rRNA, required for the assembly of 30S particles and may also be responsible for determining the conformation of the 16S rRNA at the A site. The protein is Small ribosomal subunit protein uS14 of Clostridium botulinum (strain Alaska E43 / Type E3).